The following is a 702-amino-acid chain: Heparin-sulfate lyase (702 aa).

The signal sequence occupies residues 1 to 17 (MKNIFFICFCALFAFSG). Tyrosine 314 (proton acceptor) is an active-site residue.

The protein belongs to the polysaccharide lyase 12 family.

Its subcellular location is the periplasm. The catalysed reaction is Elimination of sulfate, appears to act on linkages between N-acetyl-D-glucosamine and uronate. Product is an unsaturated sugar.. Its function is as follows. Specifically cleaves heparan sulfate-rich regions of acidic polysaccharides. Does not act on N,O-desulfated glucosamine or N-acetyl-O-sulfated glucosamine linkages. Functions in cleaving metazoan heparan sulfate and providing carbon, nitrogen and sulfate sources for microorganisms. The protein is Heparin-sulfate lyase (hepC) of Bacteroides thetaiotaomicron (strain ATCC 29148 / DSM 2079 / JCM 5827 / CCUG 10774 / NCTC 10582 / VPI-5482 / E50).